The sequence spans 158 residues: 6,7-dimethyl-8-ribityllumazine synthase (158 aa).

Residues phenylalanine 23, 61-63 (SFE), and 85-87 (AVI) contribute to the 5-amino-6-(D-ribitylamino)uracil site. 90 to 91 (DT) is a binding site for (2S)-2-hydroxy-3-oxobutyl phosphate. Histidine 93 acts as the Proton donor in catalysis. 5-amino-6-(D-ribitylamino)uracil is bound at residue phenylalanine 118. Residue arginine 132 participates in (2S)-2-hydroxy-3-oxobutyl phosphate binding.

It belongs to the DMRL synthase family.

It catalyses the reaction (2S)-2-hydroxy-3-oxobutyl phosphate + 5-amino-6-(D-ribitylamino)uracil = 6,7-dimethyl-8-(1-D-ribityl)lumazine + phosphate + 2 H2O + H(+). It participates in cofactor biosynthesis; riboflavin biosynthesis; riboflavin from 2-hydroxy-3-oxobutyl phosphate and 5-amino-6-(D-ribitylamino)uracil: step 1/2. Catalyzes the formation of 6,7-dimethyl-8-ribityllumazine by condensation of 5-amino-6-(D-ribitylamino)uracil with 3,4-dihydroxy-2-butanone 4-phosphate. This is the penultimate step in the biosynthesis of riboflavin. The sequence is that of 6,7-dimethyl-8-ribityllumazine synthase from Prochlorococcus marinus (strain NATL2A).